A 526-amino-acid polypeptide reads, in one-letter code: MGHLSAPLHRVRVPWQGLLLTASLLTFWNPPTTAQLTTESMPFNVAEGKEVLLLVHNLPQQLFGYSWYKGERVDGNRQIVGYAIGTQQATPGPANSGRETIYPNASLLIQNVTQNDTGFYTLQVIKSDLVNEEATGQFHVYPELPKPSISSNNSNPVEDKDAVAFTCEPETQDTTYLWWINNQSLPVSPRLQLSNGNRTLTLLSVTRNDTGPYECEIQNPVSANRSDPVTLNVTYGPDTPTISPSDTYYRPGANLSLSCYAASNPPAQYSWLINGTFQQSTQELFIPNITVNNSGSYTCHANNSVTGCNRTTVKTIIVTELSPVVAKPQIKASKTTVTGDKDSVNLTCSTNDTGISIRWFFKNQSLPSSERMKLSQGNTTLSINPVKREDAGTYWCEVFNPISKNQSDPIMLNVNYNALPQENGLSPGAIAGIVIGVVALVALIAVALACFLHFGKTGRASDQRDLTEHKPSVSNHTQDHSNDPPNKMNEVTYSTLNFEAQQPTQPTSASPSLTATEIIYSEVKKQ.

A signal peptide spans 1-34; sequence MGHLSAPLHRVRVPWQGLLLTASLLTFWNPPTTA. Glutamine 35 bears the Pyrrolidone carboxylic acid mark. The Ig-like V-type domain occupies 35–142; sequence QLTTESMPFN…EATGQFHVYP (108 aa). Topologically, residues 35–428 are extracellular; that stretch reads QLTTESMPFN…LPQENGLSPG (394 aa). The required for homophilic binding stretch occupies residues 39–142; it reads ESMPFNVAEG…EATGQFHVYP (104 aa). 20 N-linked (GlcNAc...) asparagine glycosylation sites follow: asparagine 104, asparagine 111, asparagine 115, asparagine 152, asparagine 182, asparagine 197, asparagine 208, asparagine 224, asparagine 232, asparagine 254, asparagine 274, asparagine 288, asparagine 292, asparagine 302, asparagine 309, asparagine 345, asparagine 351, asparagine 363, asparagine 378, and asparagine 405. Ig-like C2-type domains follow at residues 145–232, 237–317, and 323–413; these read PKPS…VTLN, PDTP…KTII, and PVVA…IMLN. A disulfide bond links cysteine 167 and cysteine 215. The cysteines at positions 259 and 299 are disulfide-linked. The cysteines at positions 348 and 396 are disulfide-linked. The chain crosses the membrane as a helical span at residues 429–452; it reads AIAGIVIGVVALVALIAVALACFL. The tract at residues 450 to 462 is interaction with calmodulin; that stretch reads CFLHFGKTGRASD. The segment at 452–526 is interaction with FLNA; it reads LHFGKTGRAS…EIIYSEVKKQ (75 aa). Residues 453 to 526 lie on the Cytoplasmic side of the membrane; sequence HFGKTGRASD…EIIYSEVKKQ (74 aa). The segment covering 461–482 has biased composition (basic and acidic residues); the sequence is SDQRDLTEHKPSVSNHTQDHSN. The interval 461-513 is disordered; that stretch reads SDQRDLTEHKPSVSNHTQDHSNDPPNKMNEVTYSTLNFEAQQPTQPTSASPSL. Over residues 489–513 the composition is skewed to polar residues; that stretch reads NEVTYSTLNFEAQQPTQPTSASPSL. The required for interaction with PTPN11 and PTPN6 and for control of phosphorylation level stretch occupies residues 489 to 526; sequence NEVTYSTLNFEAQQPTQPTSASPSLTATEIIYSEVKKQ. Tyrosine 493 carries the phosphotyrosine; by SRC, LCK, INSR and EGFR modification. The residue at position 508 (serine 508) is a Phosphoserine. Tyrosine 520 carries the post-translational modification Phosphotyrosine; by INSR, SRC and LCK. Residues 520-523 form an essential for interaction with PTPN11 and PTPN6 region; sequence YSEV.

Belongs to the immunoglobulin superfamily. CEA family. As to quaternary structure, monomer. Oligomer. Heterodimer. Homodimer. Cis-dimer/oligomer (via Ig-like C2-type and/or via cytoplasmic domains); induced by trans-homophilic cell adhesion through an allosteric mechanism transmitted by the Ig-like V-type domain, and is regulated by intracellular calcium and calmodulin. Interacts (via cytoplasmic domain) with calmodulin in a calcium dependent manner; reduces homophilic cell adhesion through dissociation of dimer. Isoform 1 interacts (via cytoplasmic domain) with PTPN11 (preferentially) and PTPN6; cis-homodimer form is preferred; this interaction is decreased by formation of Isoform 1 /Isoform 8 cis-heterodimers and is dependent on the monomer/dimer equilibrium; this interaction is phosphorylation-dependent. Isoform 1 interacts with LYN. Isoform 1 interacts (via cytoplasmic domain) with SRC (via SH2 domain); this interaction is regulated by trans-homophilic cell adhesion. Isoform 1 interacts (via cytoplasmic domain) with LCK; mediates phosphorylation at Tyr-493 and Tyr-520 resulting in PTPN6 association. Isoform 1 interacts with PTPN6; this interaction is phosphorylation-dependent and causes a profound decrease in TCR stimulation-induced CD247 and ZAP70 phosphorylation. Isoform 1 interacts with TCR/CD3 complex through TCR beta chain and CD3E; colocalizes at the cell surface and upon stimulation of the TCR/CD3 complex recruits PTPN6 in the TCR/CD3 complex, resulting in dephosphorylation of CD247 and ZAP70. Isoform 1 interacts (via cytoplasmic domain) with SHC1 (via SH2 domain); SHC1 mediates interaction with INSR or EGFR in a Ser-508 phosphorylation-dependent manner. Isoform 1 interacts with EGFR; the interaction is indirect. Isoform 1 interacts with CSF3R; down-regulates the CSF3R-STAT3 pathway through recruitment of PTPN6 that dephosphorylates CSF3R. Isoform 1 (phosphorylated form) interacts with TLR4 and SYK; recruits PTPN6 that dephosphorylates SYK, reducing the production of reactive oxygen species (ROS) and lysosome disruption, leading to a reduction of the inflammasome activity. Isoform 1 interacts with FLNA; inhibits cell migration and cell scattering by interfering with the interaction of FLNA with RALA. Isoform 1 interacts (via cytoplasmic domain) with PXN; the interaction is phosphotyrosyl-dependent. Isoform 1 interacts with KLRK1; recruits PTPN6 that dephosphorylates VAV1. Isoform 1 interacts with CEACAM8. Isoform 1 interacts with FASN; this interaction is insulin and phosphorylation-dependent; reduces fatty-acid synthase activity. Interacts (via Ig-like V-type) with HAVCR2 (via Ig-like V-type); facilitates the maturation and cell surface expression of HAVCR2 thereby regulating T cell tolerance induction. Isoform 8 interacts (via the cytoplasmic domain) with ANXA2; this interaction is regulated by phosphorylation and appears in the AIIt complex. Interacts (via Lewis X moieties) with CD209 (via C-type lectin domain); this interaction is regulated by the glycosylation pattern of CEACAM1 on cell types and regulates contact between dendritic cells and neutrophils. In terms of processing, phosphorylated on serine and tyrosine. Isoform 1 is phosphorylated on tyrosine by Src family kinases like SRC and LCK and by receptor like CSF3R, EGFR and INSR upon stimulation. Phosphorylated at Ser-508; mediates activity. Phosphorylated at Tyr-493; regulates activity. Phosphorylated at Tyr-493 by EGFR and INSR upon stimulation; this phosphorylation is Ser-508-phosphorylation-dependent; mediates cellular internalization; increases interaction with downstream proteins like SHC1 and FASN. Phosphorylated at Tyr-493 and Tyr-520 by LCK; mediates PTPN6 association and is regulated by homophilic ligation of CEACAM1 in the absence of T cell activation. Phosphorylated at Tyr-520; mediates interaction with PTPN11. Phosphorylated on serine and threonine. As to expression, expressed in columnar epithelial cells of the colon (at protein level). The predominant forms expressed by T cells are those containing a long cytoplasmic domain. Expressed in granulocytes and lymphocytes. Leukocytes only express isoforms 6 and isoform 1.

The protein localises to the cell membrane. The protein resides in the lateral cell membrane. Its subcellular location is the apical cell membrane. It localises to the basal cell membrane. It is found in the cell junction. The protein localises to the adherens junction. The protein resides in the secreted. Its subcellular location is the cytoplasmic vesicle. It localises to the secretory vesicle membrane. It is found in the cell projection. The protein localises to the microvillus membrane. Cell adhesion protein that mediates homophilic cell adhesion in a calcium-independent manner. Plays a role as coinhibitory receptor in immune response, insulin action and also functions as an activator during angiogenesis. Its coinhibitory receptor function is phosphorylation- and PTPN6 -dependent, which in turn, suppress signal transduction of associated receptors by dephosphorylation of their downstream effectors. Plays a role in immune response, of T cells, natural killer (NK) and neutrophils. Upon TCR/CD3 complex stimulation, inhibits TCR-mediated cytotoxicity by blocking granule exocytosis by mediating homophilic binding to adjacent cells, allowing interaction with and phosphorylation by LCK and interaction with the TCR/CD3 complex which recruits PTPN6 resulting in dephosphorylation of CD247 and ZAP70. Also inhibits T cell proliferation and cytokine production through inhibition of JNK cascade and plays a crucial role in regulating autoimmunity and anti-tumor immunity by inhibiting T cell through its interaction with HAVCR2. Upon natural killer (NK) cells activation, inhibit KLRK1-mediated cytolysis of CEACAM1-bearing tumor cells by trans-homophilic interactions with CEACAM1 on the target cell and lead to cis-interaction between CEACAM1 and KLRK1, allowing PTPN6 recruitment and then VAV1 dephosphorylation. Upon neutrophils activation negatively regulates IL1B production by recruiting PTPN6 to a SYK-TLR4-CEACAM1 complex, that dephosphorylates SYK, reducing the production of reactive oxygen species (ROS) and lysosome disruption, which in turn, reduces the activity of the inflammasome. Down-regulates neutrophil production by acting as a coinhibitory receptor for CSF3R by down-regulating the CSF3R-STAT3 pathway through recruitment of PTPN6 that dephosphorylates CSF3R. Also regulates insulin action by promoting INS clearance and regulating lipogenesis in liver through regulating insulin signaling. Upon INS stimulation, undergoes phosphorylation by INSR leading to INS clearance by increasing receptor-mediated insulin endocytosis. This inernalization promotes interaction with FASN leading to receptor-mediated insulin degradation and to reduction of FASN activity leading to negative regulation of fatty acid synthesis. INSR-mediated phosphorylation also provokes a down-regulation of cell proliferation through SHC1 interaction resulting in decrease coupling of SHC1 to the MAPK3/ERK1-MAPK1/ERK2 and phosphatidylinositol 3-kinase pathways. Functions as activator in angiogenesis by promoting blood vessel remodeling through endothelial cell differentiation and migration and in arteriogenesis by increasing the number of collateral arteries and collateral vessel calibers after ischemia. Also regulates vascular permeability through the VEGFR2 signaling pathway resulting in control of nitric oxide production. Down-regulates cell growth in response to EGF through its interaction with SHC1 that mediates interaction with EGFR resulting in decrease coupling of SHC1 to the MAPK3/ERK1-MAPK1/ERK2 pathway. Negatively regulates platelet aggregation by decreasing platelet adhesion on type I collagen through the GPVI-FcRgamma complex. Inhibits cell migration and cell scattering through interaction with FLNA; interferes with the interaction of FLNA with RALA. Mediates bile acid transport activity in a phosphorylation dependent manner. Negatively regulates osteoclastogenesis. Functionally, cell adhesion protein that mediates homophilic cell adhesion in a calcium-independent manner. Promotes populations of T cells regulating IgA production and secretion associated with control of the commensal microbiota and resistance to enteropathogens. The polypeptide is Cell adhesion molecule CEACAM1 (Homo sapiens (Human)).